The sequence spans 104 residues: uncharacterized protein (104 aa).

An N-terminal signal peptide occupies residues 1-18 (MGVEGMWNVFLFSLQVAA). N27 is a glycosylation site (N-linked (GlcNAc...) asparagine; by host).

This is an uncharacterized protein from Fowl adenovirus A serotype 1 (strain CELO / Phelps) (FAdV-1).